The primary structure comprises 4558 residues: MVFYLIPKRRVWLMGKPFWRSVEYFFTGNYSADDGNNNIVAIGFGGQIHAYGGDDHVTVGSIGATVYTGSGNDTVVGGSAYLKVEDSTGHLIVKGAAGYADINKSGDGNVSFAGAAGGVSIDHLGNHGDVSYGGAAAYNGITRKGLSGNVTFAGAGGYNALWHETNQGNLSFTGAGAGNKLDRTWSNRYQGSHGDVTFDGAGAANSISSRVETGNITFRGAGADNHLVRKGKVGDITLQGAGASNRIERTHQAEDVYTQTRGNIRFEGVGGYNSLYSDVAHGDIHFSGGGAYNTIIRKGSGNDFAKEGMTNAKADEIVLTKAVMSGSWIGQDHHVTAVKSASEPNTYLFAFADSTYTKINKVQLRNDPQTGELKYYSTAWYKEVNHLSNLANQDISDNGGFTAVNINGAYTLSDLKVEHQQSVTVHAVEKSLTEYEWVTYANGAVIDAKEVSLSDAKMGGHAIYADGTKVDVKAVKSNRQPNTYIYAKVLGPYTKIVVVELANDPETGALKYQARSWYKEGDHTANIANQDISSATGYNPMGKGGYSLSDLHYSVNAVRSTSETVADIEEYTDQTLFKPANDSGESSGDVRFNGAGGGNVIKSNVTRGNVHFNGGGIANVILHSSQFGNTEFNGGGAANVIVKSGEEGDLTFRGAGLANVLVHQSEQGKMDVYAGGAVNVLVRLGDGQYLAHLLAYGNISVQKGSGDSRVVMLGGYNTHTQIGSGNGLWLAAGGFNVMTQVGKGDVAAVLAGGANVLTKMGEGELTSGMLGGANVITHISNDDQLSNTTAVALGGANILTKKGKGNTLAVMGGGANVLTHVGDGTTTGVMVGGANILTKVGNGDTTGILLGVGNVLTHVGDGQTLGVMGAAGNIFTKVGDGTSIAVMIGAGNIFTHVGEGNAWALMGGLGNVFTKVGNGDALALMVAEANVFTHIGDGMSVALMLAKGNVATKVGNGTTLAAMVGNVNIFTHIGHGSTFAAMIGQANIMTKVGNDLTAALMVGKANIMTHVGDGTSLGLFAGEVNVMTKVGNGTTLAAMFGKANIMTHVGDGLTGVLALGEANIVTKLGDDFMGVVAAAKANVVTHVGDATTAAVLAGKGNILTKVGEGTTVGLLISDVGNVMTHVGDGTTIGIAKGKANLITKVGDGLGVNVTWGQANVFTQVGDGDRYNFAKGEANLITKVGDGQEVSVVQGEANIITHVGNGDDYTGAWGKANVITKVGHGQNVVLAKGEANIVTQVGDGDSFNALWSKGNIVTKVGDGMQVTAAKGQANITTTVGNGLNVTAAYGDANINTKVGDGVSVNVAWGKYNINTKVGDGLNVAVMKGKANANIHVGDGLNINASYAQNNVAIKVGNGDFYSLAVASSNTSSNKLSALFDNIKQTVLGVGGSQAINYLVQGDEASSSGTHKGRGAIATPEITKLDGFQMDAIKEVSSDLGDSLTGSVTKVDTPDLNKMQHALNVDDSSVQAPNLIVNGDFELGEHGWQSTHGVEASYAGSVYGVEGEGHGARVTELDTYTNTSLYQDLANLAQGEVIAVSFDFAKRAGLSNNEGIEVLWNGEVVFSSSGDESAWQQKNLKLTAQAGSNRIEFKGTGHNDGLGYILDNVVATSESSQQANAIREHATQNPAAQNALSDKERAEADRQRLEQEKQKQLDAVAGSQSQLESTDQQALENNGQAQRDAVKEESEAVTAELAKLAQGLDVLDGQATHTGESGDQWRNDFAGGLLDGVQSQLDDAKQLANDKIAAAKQTLSDNNSKVKESVAKSEAGVAQGEQNRAGVEQDIADAQADAEKRKADALAKGKDAQQAESDAHHAVNNAQSRGDRDVQLAENKANQAQADAQGAKQNEGDRPDRQGVTGSGLSGNAHSVEGAGETDSHVNTDSQTNADGRFSEGLTEQEQEALEGATNAVNRLQINAGIRAKNSVSSMTSMFSETNSKSIVVPTKVSPEPERQEVTRRDVRISGVNLESLSAVQGSQPTGQLASKSVPGFKSHFASTSIGIENELSGLVVVLPKNSAQTFGYVHDSQGNPLFMLTKDMNQGGYSNPVGINDIQGVNNWQTHTIELVTYPSEISDTAAVESRKEAMLWLAKEFTDHINQSNHQSLPHLVSDDGRFTLVISNSKHLIAAGNGTSIDAQGKTIGMTPSGQQATMAISAKEFGTSSSPEVRLLESAPWYQAGLRDEFLANAKNTTLDDPATAQNVYAYLTSVYSKTADLAKEYGIYINDWDPASEGFSPNAQGLTDPKVKNAWSILPRTKPVRMLELLSAEDSRYVRQQIAEKLKGTYSESLAKNVFEYFQYGGEVAGHGINNATTGSVQQPEPAILFEFRSVPSALSDFVPKTASTVKVDVKALDHFDSASRKAIITEVNALVSGSEDFDAWYQEYRASKGQPPVKNPKSSASANHKAEWLMTQHAEQWAKITAPYTDNHETLTSTKLASNDKEELHALGETSNLENNKQQENVASIINTMLNDMLPFYALRTERNLLVQEGDEGFEVRAWPGTEDKSKTIILEDPEDAAQHKAIERFILANFDNFEQMPDELFLVDNKVISHHEGRTHVLAQKVDGAWQYNATVELMSVTELLDAANVTGKIRGESYQQVIDALTDYHASITEHADYEPESVEKLLNLRKKIEGYVLGHPDSGRVEAMNSLLNQVNTRLDEVSLLSVAEQTIQAQNSFSRLYDQLEAANLKESKHLYLDQNGDFVTKGKGNLANIDLLGSREAVLEKVKLTVSNEYGQTVADTIFAGLSAKDLAKDGKGVDIAGLNKVHQAIEQHLSPVSATLYIWKPSDHSALGHAALQIGQGRTQLEGQAAADFNQQNYVSWWPLGSKSSNISNILNVATKDQPDLKLRWSDFSQPAHQNDTLEHDVASEENDGFGLHDGDIKLKRFIEKLNAAKGIDASFKEASEGYASVLLGNPDMLETTSIPAHVFQPFVEQWNDTSYDMMDVAHRFAQELRLQAQRSDDPELLEKRIGNVIRQFAERALEEIETFKASQADQGRVFRINLEGLDVAAMQAEWHRLSNDPDARYQLLTKNCSSTVAKVLKAGGADKLIGHTWLPKFGVWTPTELFNFGQALQEAQLEIAAKKQSHQVTDVLDALSGNEKPKENVAIENDGTPPRDKESLSPLTRFLNNELYGDKEARRKIGEITQTLLDHAVEKGESQKITLQGEAGRLTGYYHQGTAPSEGETSSPSGKVVLFLHGSGSSAEEQASAIRNHYQKQGIDMLAVNLRGYGESDGGPSEKGLYQDARTMFNYLVNDKGIDPSNIIIHGYSMGGPIAADLARYAAQNGQAVSGLLLDRPMPSMTKAITAHEVANPAGIVGAIAKAVNGQFSVEKNLEGLPKETSILLLTDNEGLGNEGEKLRTKLTASGYNVTGEQTFYGHEASNRLMSQYADQIVSGLSSSASVDEDLDQQGLDTTSTKDQGISNKNDHLQVVDSKEALADGKILHNQNVNSWGPITVTPTTDGGETRFDGQIIVQMENDPVVAKAAANLAGKHAESSVVVQLDSDGNYRVVYGDPSKLDGKLRWQLVGHGRDHSETNNTRLSGYSADELAVKLAKFQQSFNQAENINNKPDHISIVGCSLVSDDKQKGFGHQFINAMDANGLRVDVSVRSSELAVDEAGRKHTKDANGDWVQKAENNKVSLSWDAQGEVVAKDERIRNGIAEGDIDLSRIGVNNVDEPARGAIGDNNDVFDAPEKRKPETEVIANSSSSNQFSYSGNIQVNVGEGEFTAVNWGTSNVGIKVGTGGFKSLAFGDNNVMVHIGDGESKHSVDIGGYQALEGAQMFLGNRNVSFNFGHSNDLILMMDKSIPTPPLVNPFDGAARISGVLQGIATSGEGEDWLAAQEQQWTLSGAKKFVKDMSGLDQSSSVDYTTLVELDSQNERDSRGLKHDAEATLNKQYNQWLSGNGNSGTSQLSRADKLRQANEKLAFNFAVGGQGADIQVTTGNWNFMFGDNIQSILDTNLGSLFGLMTQQFTATGQAKTTFTYTPQDLPRQLKNKLLGQLAGVGAETTLADIFGVDYTASGQIVSRNGQAVDGVAILKEMLEVIGEFSGDQLQAFVDPAKLLDSLKAGIDMGADGIKSFAETHGLKEKAPEEEKDNSSVSVNGANVNSAQGATVADGNTETAETQDRAFGFNSLNLPNLFATIFSQDKQKEMKSLVENLKQNLTADLLNMKEKTFDFLRNSGHLQGDGDINISLGNYNFNWGGDGKDLGAYLGDNNNFWGGRGDDVFYATGKSNIFTGGEGNDMGVLMGRENMMFGGDGNDTAVVAGRINHVFLGAGDDQSFVFGEGGEIDTGSGRDYVVTSGNFNRVDTGDDQDYSVTIGNNNQVELGAGNDFANIFGNYNRINAGAGNDVVKLMGYHAVLNGGDGDDHLIATAISKFSQFNGGEGRDLMVLGGYQNTFKGGTDVDSFVVSGDVIDNLVEDIRSEDNIVFNGIDWQKLWFERSGYDLKLSILRDPSNDSDQSKFEHIGSVTFSDYFNGNRAQVVIGMSEKDLSGEREYTMLSDSAIDALVQAMSGFEPQAGDNGFIDSLESKSQAAISMAWSDVVHKKGLMV.

The signal sequence occupies residues 1-32 (MVFYLIPKRRVWLMGKPFWRSVEYFFTGNYSA). RtxA repeat units lie at residues 114-131 (GAAG…GDVS), 134-151 (GAAA…GNVT), 154-170 (GAGG…QGNL), 174-197 (GAGA…GDVT), 200-217 (GAGA…GNIT), 220-237 (GAGA…GDIT), 268-285 (GVGG…GDIH), 288-304 (GGGA…GNDF), 594-611 (GAGG…GNVH), 614-630 (GGGI…FGNT), 634-651 (GGGA…GDLT), 654-668 (GAGL…SEQG), 751-763 (AGGA…MGEG), 769-781 (MLGG…HISN), 792-808 (ALGG…GNTL), 811-826 (MGGG…DGTT), 830-845 (MVGG…NGDT), 851-865 (GVGN…GQTL), 868-885 (MGAA…TSIA), 887-901 (MIGA…GEGN), 906-920 (MGGL…GNGD), 925-942 (MVAE…MSVA), 944-960 (MLAK…GTTL), 982-994 (MIGQ…KVGN), 1001-1016 (MVGK…DGTS), 1041-1053 (GKAN…GDGL), 1077-1089 (AAAK…HVGD), 1097-1112 (AGKG…GTTV), 1120-1132 (GNVM…GTTI), 1135-1152 (AKGK…LGVN), 1155-1169 (WGQA…DGDR), 1173-1189 (AKGE…GQEV), 1194-1209 (GEAN…DDYT), 1211-1227 (AWGK…GQNV), 1230-1246 (AKGE…GDSF), 1252-1266 (KGNI…MQVT), 1268-1285 (AKGQ…LNVT), 1306-1323 (AWGK…LNVA), and 1325-1342 (MKGK…LNIN). 3 disordered regions span residues 1623–1688 (HATQ…KEES), 1752–1779 (TLSD…QNRA), and 1791–1890 (DAEK…NADG). A compositionally biased stretch (polar residues) spans 1625–1634 (TQNPAAQNAL). Residues 1635–1654 (SDKERAEADRQRLEQEKQKQ) are compositionally biased toward basic and acidic residues. Positions 1660–1679 (GSQSQLESTDQQALENNGQA) are enriched in polar residues. Positions 1791 to 1815 (DAEKRKADALAKGKDAQQAESDAHH) are enriched in basic and acidic residues. Positions 1879–1888 (HVNTDSQTNA) are enriched in polar residues. The 435-residue stretch at 1988–2422 (VPGFKSHFAS…HAEQWAKITA (435 aa)) folds into the ACD domain. 1999–2003 (SIGIE) is an ATP binding site. The Mg(2+) site is built by Glu-2003, Glu-2065, and Gln-2149. An ATP-binding site is contributed by Arg-2255. A Mg(2+)-binding site is contributed by Glu-2326. A membrane localization region (MLD) region spans residues 2574–2658 (ELMSVTELLD…SLLNQVNTRL (85 aa)). The tract at residues 2734-3098 (EYGQTVADTI…HQVTDVLDAL (365 aa)) is rho inactivation domain (RID). The segment at 3195 to 3310 (VVLFLHGSGS…MPSMTKAITA (116 aa)) is ABH effector region. A disordered region spans residues 3404–3426 (ASVDEDLDQQGLDTTSTKDQGIS). Residues 3414–3426 (GLDTTSTKDQGIS) show a composition bias toward polar residues. The region spanning 3462 to 3646 (PTTDGGETRF…AENNKVSLSW (185 aa)) is the Peptidase C80 domain. 1D-myo-inositol hexakisphosphate-binding positions include 3468–3470 (ETR), 3495–3496 (KH), and Arg-3526. The active-site For cysteine protease activity is the His-3532. A 1D-myo-inositol hexakisphosphate-binding site is contributed by Ser-3577. Cys-3581 functions as the Nucleophile; for cysteine protease activity in the catalytic mechanism. Residues 3610–3612 (SVR), 3623–3624 (RK), Lys-3636, and Lys-3641 each bind 1D-myo-inositol hexakisphosphate.

Mg(2+) is required as a cofactor.

The protein localises to the secreted. The protein resides in the host cytoplasm. It is found in the host cytosol. Its subcellular location is the host cell membrane. The enzyme catalyses L-lysyl-/S-(2E,6E,10E)-geranylgeranyl-L-cysteinyl-[protein] + hexadecanoyl-CoA = N(6)-hexadecanoyl-L-lysyl-/S-(2E,6E,10E)-geranylgeranyl-L-cysteinyl-[protein] + CoA + H(+). It catalyses the reaction L-lysyl-/S-(2E,6E,10E)-geranylgeranyl-L-cysteinyl-[protein] + dodecanoyl-CoA = N(6)-dodecanoyl-L-lysyl-/S-(2E,6E,10E)-geranylgeranyl-L-cysteinyl-[protein] + CoA + H(+). The catalysed reaction is L-lysyl-/S-(2E,6E,10E)-geranylgeranyl-L-cysteinyl-[protein] + decanoyl-CoA = N(6)-decanoyl-L-lysyl-/S-(2E,6E,10E)-geranylgeranyl-L-cysteinyl-[protein] + CoA + H(+). Its activity is regulated as follows. Protease activity is inhibited by N-ethylmaleimide but not other protease inhibitors. Protease activity is inhibited by aza-leucine epoxide. Protease activity is activated upon binding inositol hexakisphosphate (InsP6) via an allosteric mechanism: the active site is disordered or occluded in the absence of InsP6, protecting the protease active-site sulfhydryl until the toxin enters a eukaryotic cell. Upon processing at the Leu-3441-Ala-3442 site, the peptidase C80 domain is converted to a form with much reduced affinity for InsP6, but is reactivated for high affinity binding of InsP6 by cooperative binding of both a new substrate and InsP6. Reactivation allows cleavage at other sites, specifically at Leu residues between the effector domains. Its function is as follows. Precursor of a multifunctional toxin that causes destruction of the actin cytoskeleton by covalent cross-linking of actin and inactivation of Rho GTPases when translocated into the host cytoplasm. Upon translocation into the host cell, undergoes autoprocessing in cis mediated by the peptidase C80 domain (also named CPD domain): the protease activity is activated upon binding inositol hexakisphosphate (InsP6) present at the host cell membrane and delivers the Cysteine protease domain-containing toxin F3 chain to the host cytosol. The Cysteine protease domain-containing toxin F3 chain will then further cleave and release effector toxin chains that cause disassembly of the actin cytoskeleton and enhance V.cholerae colonization of the small intestine, possibly by facilitating evasion of phagocytic cells. In terms of biological role, following autocatalytic cleavage in cis at the Leu-3441-Ala-3442 site, this chain mediates processing in trans to release other individual toxin chains to the host cytosol. Released effector toxin chains cause disassembly of the actin cytoskeleton and enhance V.cholerae colonization of the small intestine, possibly by facilitating evasion of phagocytic cells. Functionally, actin-directed toxin that catalyzes the covalent cross-linking of host cytoplasmic monomeric actin. Mediates the cross-link between 'Lys-50' of one monomer and 'Glu-270' of another actin monomer, resulting in formation of highly toxic actin oligomers that cause cell rounding. The toxin can be highly efficient at very low concentrations by acting on formin homology family proteins: toxic actin oligomers bind with high affinity to formins and adversely affect both nucleation and elongation abilities of formins, causing their potent inhibition in both profilin-dependent and independent manners. Acts as an acid--amino-acid ligase that transfers the gamma-phosphoryl group of ATP to the 'Glu-270' actin residue, resulting in the formation of an activated acyl phosphate intermediate. This intermediate is further hydrolyzed and the energy of hydrolysis is utilized for the formation of the amide bond between actin subunits. N-epsilon-fatty acyltransferase that mediates lysine-palmitoylation of host Rho GTPase proteins, with a strong preference for host Rac1. After delivery to the host cytosol, localizes to the host cell membrane where it palmitoylates host Rho GTPase proteins, resulting in loss of all active GTP-bound Rho and subsequent actin depolymerization. Prenylation of host Rac1 at the C-terminus is required for lysine-palmitoylation. Its function is as follows. Indirectly activates the small GTPase CDC42. The polypeptide is Multifunctional-autoprocessing repeats-in-toxin (Vibrio cholerae serotype O1 (strain ATCC 39315 / El Tor Inaba N16961)).